A 1212-amino-acid polypeptide reads, in one-letter code: Dermatan-sulfate epimerase-like protein (1212 aa).

The signal sequence occupies residues 1 to 20 (MALMFTGHLLFLALLMFAFS). N-linked (GlcNAc...) asparagine glycosylation is found at asparagine 28, asparagine 666, asparagine 688, and asparagine 709. The next 2 membrane-spanning stretches (helical) occupy residues 764-784 (IIFP…CISL) and 803-823 (WILI…WSTC). Asparagine 874 carries an N-linked (GlcNAc...) asparagine glycan.

It belongs to the dermatan-sulfate isomerase family. As to expression, expressed in different brain areas as well as in multiple other peripheral tissues.

Its subcellular location is the membrane. This Homo sapiens (Human) protein is Dermatan-sulfate epimerase-like protein (DSEL).